The primary structure comprises 37 residues: Disintegrin morulustatin (37 aa).

Intrachain disulfides connect Cys-12–Cys-16, Cys-22–Cys-36, and Cys-24–Cys-31.

It belongs to the venom metalloproteinase (M12B) family. P-II subfamily. P-IIa sub-subfamily. Expressed by the venom gland.

The protein resides in the secreted. Functionally, inhibits ADP-induced platelet aggregation in human whole blood in a concentration-dependent manner (IC(50)=89.5 nM). The polypeptide is Disintegrin morulustatin (Crotalus morulus (Tamaulipan rock rattlesnake)).